Consider the following 256-residue polypeptide: Glycerol-3-phosphate acyltransferase (256 aa).

The next 6 membrane-spanning stretches (helical) occupy residues 2 to 22, 58 to 78, 90 to 110, 123 to 143, 153 to 173, and 211 to 231; these read FPYL…SVLW, LAVA…AIGL, SYFI…WFKF, LIVV…IFAF, IIGT…GVMG, and FADG…ILVV.

Belongs to the PlsY family. Probably interacts with PlsX.

It localises to the cell membrane. It carries out the reaction an acyl phosphate + sn-glycerol 3-phosphate = a 1-acyl-sn-glycero-3-phosphate + phosphate. The protein operates within lipid metabolism; phospholipid metabolism. Catalyzes the transfer of an acyl group from acyl-phosphate (acyl-PO(4)) to glycerol-3-phosphate (G3P) to form lysophosphatidic acid (LPA). This enzyme utilizes acyl-phosphate as fatty acyl donor, but not acyl-CoA or acyl-ACP. This is Glycerol-3-phosphate acyltransferase from Mesoplasma florum (strain ATCC 33453 / NBRC 100688 / NCTC 11704 / L1) (Acholeplasma florum).